The chain runs to 294 residues: 4-hydroxy-tetrahydrodipicolinate synthase (294 aa).

Thr-48 serves as a coordination point for pyruvate. Residue Tyr-136 is the Proton donor/acceptor of the active site. Residue Lys-164 is the Schiff-base intermediate with substrate of the active site. Val-206 contacts pyruvate.

Belongs to the DapA family. In terms of assembly, homotetramer; dimer of dimers.

The protein localises to the cytoplasm. The enzyme catalyses L-aspartate 4-semialdehyde + pyruvate = (2S,4S)-4-hydroxy-2,3,4,5-tetrahydrodipicolinate + H2O + H(+). The protein operates within amino-acid biosynthesis; L-lysine biosynthesis via DAP pathway; (S)-tetrahydrodipicolinate from L-aspartate: step 3/4. In terms of biological role, catalyzes the condensation of (S)-aspartate-beta-semialdehyde [(S)-ASA] and pyruvate to 4-hydroxy-tetrahydrodipicolinate (HTPA). This is 4-hydroxy-tetrahydrodipicolinate synthase from Desulforudis audaxviator (strain MP104C).